A 60-amino-acid polypeptide reads, in one-letter code: UPF0434 protein KPN78578_09190 (60 aa).

This sequence belongs to the UPF0434 family.

The polypeptide is UPF0434 protein KPN78578_09190 (Klebsiella pneumoniae subsp. pneumoniae (strain ATCC 700721 / MGH 78578)).